A 167-amino-acid polypeptide reads, in one-letter code: uncharacterized protein (167 aa).

A helical membrane pass occupies residues 39–59 (LSLFSLSPLFLLLSISSLIFS). Positions 92–122 (LGTQIEMITQAMTTLESRVTDLQQESNDHRT) form a coiled coil. The interval 134–167 (RDLGDENRPKPTTNKMIATGEQHKGEVSTSLFHD) is disordered. A compositionally biased stretch (basic and acidic residues) spans 154-167 (EQHKGEVSTSLFHD).

It localises to the mitochondrion membrane. This is an uncharacterized protein from Arabidopsis thaliana (Mouse-ear cress).